The sequence spans 102 residues: Cuticle protein 10.9 (102 aa).

A Pyrrolidone carboxylic acid modification is found at glutamine 1. Positions 1-45 (QLAEQYPPHPYSFSYDATDETGARISTSESGDESNSKTGSYSYQT) are disordered. A Chitin-binding type R&amp;R domain is found at 8 to 74 (PHPYSFSYDA…SIDTNEPGTK (67 aa)). A compositionally biased stretch (polar residues) spans 36–45 (SKTGSYSYQT).

In terms of biological role, component of the cuticle of the tick. Binds chitin. This chain is Cuticle protein 10.9, found in Ixodes ricinus (Common tick).